A 294-amino-acid chain; its full sequence is 4-hydroxybenzoate octaprenyltransferase (294 aa).

Transmembrane regions (helical) follow at residues 24–44, 47–67, 99–119, 139–159, 164–184, 213–233, 238–258, and 274–294; these read IGIL…ADGF, LHLI…GCVI, LLAA…DPLV, FLAI…PMGF, GEVP…AVAY, VAAV…VGIA, PWFF…YTLI, and NWVG…FPAA.

This sequence belongs to the UbiA prenyltransferase family. Mg(2+) serves as cofactor.

Its subcellular location is the cell inner membrane. It carries out the reaction all-trans-octaprenyl diphosphate + 4-hydroxybenzoate = 4-hydroxy-3-(all-trans-octaprenyl)benzoate + diphosphate. Its pathway is cofactor biosynthesis; ubiquinone biosynthesis. Functionally, catalyzes the prenylation of para-hydroxybenzoate (PHB) with an all-trans polyprenyl group. Mediates the second step in the final reaction sequence of ubiquinone-8 (UQ-8) biosynthesis, which is the condensation of the polyisoprenoid side chain with PHB, generating the first membrane-bound Q intermediate 3-octaprenyl-4-hydroxybenzoate. The polypeptide is 4-hydroxybenzoate octaprenyltransferase (Aromatoleum aromaticum (strain DSM 19018 / LMG 30748 / EbN1) (Azoarcus sp. (strain EbN1))).